The primary structure comprises 106 residues: UPF0235 protein OCAR_4310/OCA5_c02140 (106 aa).

This sequence belongs to the UPF0235 family.

The sequence is that of UPF0235 protein OCAR_4310/OCA5_c02140 from Afipia carboxidovorans (strain ATCC 49405 / DSM 1227 / KCTC 32145 / OM5) (Oligotropha carboxidovorans).